The sequence spans 124 residues: Large ribosomal subunit protein eL31 (124 aa).

It belongs to the eukaryotic ribosomal protein eL31 family. In terms of assembly, component of the large ribosomal subunit.

The protein resides in the cytoplasm. In terms of biological role, component of the large ribosomal subunit. The ribosome is a large ribonucleoprotein complex responsible for the synthesis of proteins in the cell. The polypeptide is Large ribosomal subunit protein eL31 (rpl31) (Paralichthys olivaceus (Bastard halibut)).